The chain runs to 408 residues: Argininosuccinate synthase (408 aa).

ATP contacts are provided by residues A16–S24 and A44. Positions 96 and 101 each coordinate L-citrulline. G126 contacts ATP. Residues T128, N132, and D133 each coordinate L-aspartate. An L-citrulline-binding site is contributed by N132. L-citrulline-binding residues include R136, S185, S194, E270, and Y282.

The protein belongs to the argininosuccinate synthase family. Type 1 subfamily. As to quaternary structure, homotetramer.

It localises to the cytoplasm. It catalyses the reaction L-citrulline + L-aspartate + ATP = 2-(N(omega)-L-arginino)succinate + AMP + diphosphate + H(+). The protein operates within amino-acid biosynthesis; L-arginine biosynthesis; L-arginine from L-ornithine and carbamoyl phosphate: step 2/3. This is Argininosuccinate synthase from Shewanella woodyi (strain ATCC 51908 / MS32).